Consider the following 87-residue polypeptide: UPF0213 protein SSA_0709 (87 aa).

The region spanning Asn-3 to Ala-78 is the GIY-YIG domain.

Belongs to the UPF0213 family.

The protein is UPF0213 protein SSA_0709 of Streptococcus sanguinis (strain SK36).